Here is a 547-residue protein sequence, read N- to C-terminus: RING finger protein ETP1 homolog (547 aa).

The RING-type zinc finger occupies 208 to 248 (CVVCLERMDSSITGLITIVCQHTFHCPCLQKWGNSSCPVCR). Residues 245-338 (PVCRYTQKVQ…GKLVELSTDG (94 aa)) form a UBP-type; degenerate zinc finger. The Zn(2+) site is built by Cys262, Cys265, Cys274, Cys277, Cys282, His289, His293, and His299. Over residues 514–523 (LPNNSTVRSN) the composition is skewed to polar residues. Residues 514-547 (LPNNSTVRSNSVKSKKKKKKKPVVPSSSGSLGTD) form a disordered region. Residues 526-535 (KSKKKKKKKP) are compositionally biased toward basic residues.

The protein localises to the cytoplasm. May act as a cytoplasmic retention protein with a role in regulating nuclear transport. This Schizosaccharomyces pombe (strain 972 / ATCC 24843) (Fission yeast) protein is RING finger protein ETP1 homolog.